A 206-amino-acid chain; its full sequence is Pyridoxine/pyridoxamine 5'-phosphate oxidase (206 aa).

FMN contacts are provided by residues 49 to 54, 69 to 70, Lys-76, and Gln-98; these read RMVLLK and YT. A substrate-binding site is contributed by Lys-54. Residues Tyr-116, Arg-120, and Ser-124 each coordinate substrate. FMN contacts are provided by residues 133–134 and Trp-177; that span reads QS. 183–185 contributes to the substrate binding site; that stretch reads RLH. Arg-187 contributes to the FMN binding site.

This sequence belongs to the pyridoxamine 5'-phosphate oxidase family. As to quaternary structure, homodimer. Requires FMN as cofactor.

The enzyme catalyses pyridoxamine 5'-phosphate + O2 + H2O = pyridoxal 5'-phosphate + H2O2 + NH4(+). The catalysed reaction is pyridoxine 5'-phosphate + O2 = pyridoxal 5'-phosphate + H2O2. It functions in the pathway cofactor metabolism; pyridoxal 5'-phosphate salvage; pyridoxal 5'-phosphate from pyridoxamine 5'-phosphate: step 1/1. The protein operates within cofactor metabolism; pyridoxal 5'-phosphate salvage; pyridoxal 5'-phosphate from pyridoxine 5'-phosphate: step 1/1. Its function is as follows. Catalyzes the oxidation of either pyridoxine 5'-phosphate (PNP) or pyridoxamine 5'-phosphate (PMP) into pyridoxal 5'-phosphate (PLP). This is Pyridoxine/pyridoxamine 5'-phosphate oxidase from Jannaschia sp. (strain CCS1).